We begin with the raw amino-acid sequence, 128 residues long: Fluoride-specific ion channel FluC (128 aa).

The next 4 membrane-spanning stretches (helical) occupy residues 1–21 (MPER…GATA), 45–65 (LAGC…SLVS), 70–90 (LLLA…MYEI), and 99–119 (IFYS…CLYF). Residues G78 and T81 each coordinate Na(+).

Belongs to the fluoride channel Fluc/FEX (TC 1.A.43) family.

Its subcellular location is the cell inner membrane. The catalysed reaction is fluoride(in) = fluoride(out). Its activity is regulated as follows. Na(+) is not transported, but it plays an essential structural role and its presence is essential for fluoride channel function. In terms of biological role, fluoride-specific ion channel. Important for reducing fluoride concentration in the cell, thus reducing its toxicity. The polypeptide is Fluoride-specific ion channel FluC (Chlorobium phaeobacteroides (strain BS1)).